The chain runs to 426 residues: MVKSSNIAIHSHVRSLGLDDCGNPVEKPDAVIGQENAREAAGLIVEMVRTKRMSGRAVLISGPVGSGKTALAVGISEELGAGTPFTSMSGSEVYSNEVKKTEVLEEALRRSILVRMRELKDVYEGEVVELRIVDEENPLSSYPKRIKEMFVILKTSKESKKLKLAPSLYEQIDKQRIVNGDVVYIEVNSGVIKKLGRSEAHMNDFDLEADTYVPIPKGEVLKRKEVMQSVTLHDLDMANARPSGQDMLSLVFRILSPRKTEITERLRGDVNRMVNGYLENGNAEIVPGVLFIDEVHMLDVECFTFLHKVIESPLSPTIIFASNKGMAPIKGSDGLLGPFGITKDLLDRIVIISVKRNPDEANREIIRRRMKEEGLEMDDDAFGFFVGLSTSRSLRYCISLIPLLKTYGGCVSVRNVEEVAELFHDS.

62–69 provides a ligand contact to ATP; that stretch reads GPVGSGKT.

The protein belongs to the RuvB family. Component of the SWR1 chromatin remodeling complex, the INO80 chromatin remodeling complex, and of the R2TP complex.

It localises to the nucleus. It catalyses the reaction ATP + H2O = ADP + phosphate + H(+). In terms of biological role, DNA helicase which participates in several chromatin remodeling complexes, including the SWR1 and the INO80 complexes. The SWR1 complex mediates the ATP-dependent exchange of histone H2A for the H2A variant HZT1 leading to transcriptional regulation of selected genes by chromatin remodeling. The INO80 complex remodels chromatin by shifting nucleosomes and is involved in DNA repair. Also involved in pre-rRNA processing. This chain is RuvB-like protein 1 (RVB1), found in Encephalitozoon cuniculi (strain GB-M1) (Microsporidian parasite).